Consider the following 108-residue polypeptide: MIKTTLLFFATALCEIIGCFLPWLWLKRNASIWLLLPAGISLALFVWLLTLHPAASGRVYAAYGGVYVCTALMWLRVVDGVKLTLYDWTGPLIALCGMLIIVVGWGRT.

Topologically, residues 1-5 (MIKTT) are periplasmic. The helical transmembrane segment at 6-26 (LLFFATALCEIIGCFLPWLWL) threads the bilayer. The Cytoplasmic portion of the chain corresponds to 27–30 (KRNA). Residues 31-51 (SIWLLLPAGISLALFVWLLTL) traverse the membrane as a helical segment. Topologically, residues 52–60 (HPAASGRVY) are periplasmic. The helical transmembrane segment at 61 to 81 (AAYGGVYVCTALMWLRVVDGV) threads the bilayer. The Cytoplasmic segment spans residues 82–84 (KLT). Residues 85 to 105 (LYDWTGPLIALCGMLIIVVGW) form a helical membrane-spanning segment. The Periplasmic portion of the chain corresponds to 106 to 108 (GRT).

The protein belongs to the UPF0060 family.

Its subcellular location is the cell inner membrane. The chain is UPF0060 membrane protein YnfA from Escherichia coli O157:H7.